Reading from the N-terminus, the 1441-residue chain is Envelopment polyprotein (1441 aa).

Residues 1-13 (MIRMLVLIVVTAA) form the signal peptide. Residues 14–200 (SPVYQRCFQD…GSIANSICQN (187 aa)) lie on the Lumenal side of the membrane. The N-linked (GlcNAc...) asparagine; by host glycan is linked to asparagine 57. The helical transmembrane segment at 201-221 (IEIIILVTLTLLIFILLSILS) threads the bilayer. Over 222–305 (KTYICYLLMP…RAARVMCKSK (84 aa)) the chain is Cytoplasmic. The chain crosses the membrane as a helical span at residues 306–326 (GPASILSIITAVLVLTFVTPI). Residues 327-365 (NSMVLGESKETFELEELPDDMLEMALRINSYYFTCILNY) are Lumenal-facing. A helical membrane pass occupies residues 366 to 386 (AVSWGLIIAGLLVGLIFKKYQ). Residues 387–452 (HRFLNIYAMY…LVQYKAKWMM (66 aa)) are Cytoplasmic-facing. The helical transmembrane segment at 453–473 (NFLIIYIFLILIKDSAIVGQA) threads the bilayer. At 474–1395 (TGTDFTTCLE…EPFKNLFGSY (922 aa)) the chain is on the lumenal side. N-linked (GlcNAc...) asparagine; by host glycosylation is found at asparagine 490 and asparagine 1177. A helical membrane pass occupies residues 1396-1416 (IGIFYTFIISIIALLVIIYVL). The Cytoplasmic segment spans residues 1417-1441 (LPICFKLRDTLRKHDDAYKREMKIR).

It belongs to the orthobunyavirus envelope glycoprotein family. As to quaternary structure, glycoprotein C and Glycoprotein N interact with each other. Post-translationally, specific enzymatic cleavages in vivo yield mature proteins including nonstructural protein NSm, glycoprotein C, and glycoprotein N.

Its subcellular location is the virion membrane. The protein resides in the host Golgi apparatus membrane. It localises to the host endoplasmic reticulum membrane. Functionally, glycoprotein C and Glycoprotein N interact with each other and are present at the surface of the virion. They are able to attach the virion to a cell receptor and to promote fusion of membranes after endocytosis of the virion. This chain is Envelopment polyprotein (GP), found in Bunyavirus La Crosse.